We begin with the raw amino-acid sequence, 264 residues long: THAP domain-containing protein 10 (264 aa).

The THAP-type zinc-finger motif lies at 1-90 (MPARCVAAHC…LVAGAVPTLH (90 aa)). Disordered stretches follow at residues 90–136 (HRVP…PRAG) and 160–195 (TQPHADNPSNTVTSVPTHCEEGPVHKSTQISLKRPR). A compositionally biased stretch (basic and acidic residues) spans 99 to 122 (GGEEGDQAGRPDTRGELQAARHSE). Over residues 160–175 (TQPHADNPSNTVTSVP) the composition is skewed to polar residues.

This chain is THAP domain-containing protein 10 (THAP10), found in Pongo abelii (Sumatran orangutan).